Here is a 279-residue protein sequence, read N- to C-terminus: Orotidine 5'-phosphate decarboxylase (279 aa).

Substrate is bound by residues Asp8, Lys30, 58–67 (DLKIHDIPNT), Thr117, Arg177, Gln186, Gly206, and Arg207. Lys60 (proton donor) is an active-site residue.

This sequence belongs to the OMP decarboxylase family. Type 1 subfamily. Homodimer.

The catalysed reaction is orotidine 5'-phosphate + H(+) = UMP + CO2. It participates in pyrimidine metabolism; UMP biosynthesis via de novo pathway; UMP from orotate: step 2/2. Catalyzes the decarboxylation of orotidine 5'-monophosphate (OMP) to uridine 5'-monophosphate (UMP). The protein is Orotidine 5'-phosphate decarboxylase of Campylobacter jejuni (strain RM1221).